A 309-amino-acid polypeptide reads, in one-letter code: HPr kinase/phosphorylase (309 aa).

Residues His138 and Lys159 contribute to the active site. 153–160 (GDSGIGKS) provides a ligand contact to ATP. Ser160 serves as a coordination point for Mg(2+). Residue Asp177 is the Proton acceptor; for phosphorylation activity. Proton donor; for dephosphorylation activity of the active site. An important for the catalytic mechanism of both phosphorylation and dephosphorylation region spans residues 201–210 (LEIRGVGIID). Glu202 is a Mg(2+) binding site. Arg243 is an active-site residue. The segment at 264–269 (PVKTGR) is important for the catalytic mechanism of dephosphorylation.

The protein belongs to the HPrK/P family. In terms of assembly, homohexamer. Mg(2+) serves as cofactor.

It catalyses the reaction [HPr protein]-L-serine + ATP = [HPr protein]-O-phospho-L-serine + ADP + H(+). The enzyme catalyses [HPr protein]-O-phospho-L-serine + phosphate + H(+) = [HPr protein]-L-serine + diphosphate. Functionally, catalyzes the ATP- as well as the pyrophosphate-dependent phosphorylation of a specific serine residue in HPr, a phosphocarrier protein of the phosphoenolpyruvate-dependent sugar phosphotransferase system (PTS). HprK/P also catalyzes the pyrophosphate-producing, inorganic phosphate-dependent dephosphorylation (phosphorolysis) of seryl-phosphorylated HPr (P-Ser-HPr). The two antagonistic activities of HprK/P are regulated by several intracellular metabolites, which change their concentration in response to the absence or presence of rapidly metabolisable carbon sources (glucose, fructose, etc.) in the growth medium. Therefore, by controlling the phosphorylation state of HPr, HPrK/P is a sensor enzyme that plays a major role in the regulation of carbon metabolism and sugar transport: it mediates carbon catabolite repression (CCR), and regulates PTS-catalyzed carbohydrate uptake and inducer exclusion. This is HPr kinase/phosphorylase from Streptococcus thermophilus (strain CNRZ 1066).